Here is a 451-residue protein sequence, read N- to C-terminus: Tubulin alpha-1 chain (451 aa).

Q11 is a binding site for GTP. Residue K40 is modified to N6-acetyllysine. 5 residues coordinate GTP: E71, T145, T179, N206, and N228. E71 contributes to the Mg(2+) binding site. Residue E254 is part of the active site. Positions 429–451 (EKDYEEVGAESGEGEEGDEGEEY) are disordered. Positions 431–451 (DYEEVGAESGEGEEGDEGEEY) are enriched in acidic residues.

This sequence belongs to the tubulin family. Dimer of alpha and beta chains. A typical microtubule is a hollow water-filled tube with an outer diameter of 25 nm and an inner diameter of 15 nM. Alpha-beta heterodimers associate head-to-tail to form protofilaments running lengthwise along the microtubule wall with the beta-tubulin subunit facing the microtubule plus end conferring a structural polarity. Microtubules usually have 13 protofilaments but different protofilament numbers can be found in some organisms and specialized cells. It depends on Mg(2+) as a cofactor. Post-translationally, undergoes a tyrosination/detyrosination cycle, the cyclic removal and re-addition of a C-terminal tyrosine residue by the enzymes tubulin tyrosine carboxypeptidase (TTCP) and tubulin tyrosine ligase (TTL), respectively. In terms of processing, acetylation of alpha chains at Lys-40 stabilizes microtubules and affects affinity and processivity of microtubule motors. This modification has a role in multiple cellular functions, ranging from cell motility, cell cycle progression or cell differentiation to intracellular trafficking and signaling.

Its subcellular location is the cytoplasm. It localises to the cytoskeleton. The catalysed reaction is GTP + H2O = GDP + phosphate + H(+). In terms of biological role, tubulin is the major constituent of microtubules, a cylinder consisting of laterally associated linear protofilaments composed of alpha- and beta-tubulin heterodimers. Microtubules grow by the addition of GTP-tubulin dimers to the microtubule end, where a stabilizing cap forms. Below the cap, tubulin dimers are in GDP-bound state, owing to GTPase activity of alpha-tubulin. The polypeptide is Tubulin alpha-1 chain (TUBA1) (Anemia phyllitidis (Fern)).